The sequence spans 594 residues: Elongation factor 4 (594 aa).

Residues 2-184 (KNIRNFSIIA…TIVAKVPAPE (183 aa)) form the tr-type G domain. Residues 14-19 (DHGKST) and 131-134 (NKID) each bind GTP.

This sequence belongs to the TRAFAC class translation factor GTPase superfamily. Classic translation factor GTPase family. LepA subfamily.

Its subcellular location is the cell inner membrane. It catalyses the reaction GTP + H2O = GDP + phosphate + H(+). Required for accurate and efficient protein synthesis under certain stress conditions. May act as a fidelity factor of the translation reaction, by catalyzing a one-codon backward translocation of tRNAs on improperly translocated ribosomes. Back-translocation proceeds from a post-translocation (POST) complex to a pre-translocation (PRE) complex, thus giving elongation factor G a second chance to translocate the tRNAs correctly. Binds to ribosomes in a GTP-dependent manner. In Francisella philomiragia subsp. philomiragia (strain ATCC 25017 / CCUG 19701 / FSC 153 / O#319-036), this protein is Elongation factor 4.